Here is a 255-residue protein sequence, read N- to C-terminus: Leucyl/phenylalanyl-tRNA--protein transferase (255 aa).

Belongs to the L/F-transferase family.

It is found in the cytoplasm. The enzyme catalyses N-terminal L-lysyl-[protein] + L-leucyl-tRNA(Leu) = N-terminal L-leucyl-L-lysyl-[protein] + tRNA(Leu) + H(+). It carries out the reaction N-terminal L-arginyl-[protein] + L-leucyl-tRNA(Leu) = N-terminal L-leucyl-L-arginyl-[protein] + tRNA(Leu) + H(+). It catalyses the reaction L-phenylalanyl-tRNA(Phe) + an N-terminal L-alpha-aminoacyl-[protein] = an N-terminal L-phenylalanyl-L-alpha-aminoacyl-[protein] + tRNA(Phe). Functionally, functions in the N-end rule pathway of protein degradation where it conjugates Leu, Phe and, less efficiently, Met from aminoacyl-tRNAs to the N-termini of proteins containing an N-terminal arginine or lysine. In Polaromonas sp. (strain JS666 / ATCC BAA-500), this protein is Leucyl/phenylalanyl-tRNA--protein transferase.